Consider the following 603-residue polypeptide: MYNIYKSLNQQVQRALNTAFPEAASQVKESGDFLNPQLVAATKPEFGDFQINGALALARIIKKSPRQIAEILIKQLESNEVFKAICLPPEIAGPGFINLTLQNTCLINEITSRLNDDLLGVPLVNDDEITKKLKPVIVDFSSPNIAKEMHVGHLRSTIIGDSIARILNYRGYKVIRLNHVGDWGTQFGMLITHLKEVAPKALTTANVINLGNLVEFYKKAKQRFDEDEYFQQCSRNEVVNLQRGNKESLKAWELLCEQSRKEFNKIYDRLKIEISERGESFYNPFLQGVIDDLTRSGLLVEDDGAKCVFLNGINGKDGNPLPLIIQKADGGFNYATTDLAAIRYRLKDQPDGDGAGRIIYVTDSGQANHFAGVFQVAKRAKWLPSSSRIEHVPFGLVQGEDGKKLKTRSGETVRLKDLLDEAISRAKLDIERRLNEENRKESQAFIEKVSNTIGIAAVKYADLSQNRITNYQFSFDRMLALQGNTAPYLLYAVVRIAGINRKGGDLHSSVNKLNFSEPQEWRLIRELLKFDEVIIAVEEELLPNRLCNYLFELSQVFNRFYDQIPVLKAEEPSRSCRLALCQLTGDTLKKGLNLLGISTLERM.

Positions P143–H153 match the 'HIGH' region motif.

This sequence belongs to the class-I aminoacyl-tRNA synthetase family. As to quaternary structure, monomer.

It localises to the cytoplasm. It carries out the reaction tRNA(Arg) + L-arginine + ATP = L-arginyl-tRNA(Arg) + AMP + diphosphate. This chain is Arginine--tRNA ligase, found in Prochlorococcus marinus (strain SARG / CCMP1375 / SS120).